Here is an 88-residue protein sequence, read N- to C-terminus: Acyl-CoA-binding protein homolog (88 aa).

The region spanning 3–88 (PQADFDKAAG…AHELIEKYGL (86 aa)) is the ACB domain. Residues lysine 15, 30–34 (YGLYK), lysine 52, lysine 56, and tyrosine 75 each bind an acyl-CoA.

Belongs to the ACBP family. Brain. Is selectively expressed in glial cells.

It is found in the endoplasmic reticulum. The protein localises to the golgi apparatus. Its function is as follows. May play important functions in the control of brain and pituitary activities. May regulate GABA neurotransmission through a paracrine and/or autocrine mechanism. May not bind acyl-CoA esters. In Pelophylax ridibundus (Marsh frog), this protein is Acyl-CoA-binding protein homolog.